A 344-amino-acid polypeptide reads, in one-letter code: N-acetyl-gamma-glutamyl-phosphate reductase (344 aa).

Cysteine 149 is an active-site residue.

This sequence belongs to the NAGSA dehydrogenase family. Type 1 subfamily.

The protein resides in the cytoplasm. The catalysed reaction is N-acetyl-L-glutamate 5-semialdehyde + phosphate + NADP(+) = N-acetyl-L-glutamyl 5-phosphate + NADPH + H(+). It functions in the pathway amino-acid biosynthesis; L-arginine biosynthesis; N(2)-acetyl-L-ornithine from L-glutamate: step 3/4. Functionally, catalyzes the NADPH-dependent reduction of N-acetyl-5-glutamyl phosphate to yield N-acetyl-L-glutamate 5-semialdehyde. This is N-acetyl-gamma-glutamyl-phosphate reductase from Shouchella clausii (strain KSM-K16) (Alkalihalobacillus clausii).